The sequence spans 410 residues: Peptidase T (410 aa).

His79 provides a ligand contact to Zn(2+). Residue Asp81 is part of the active site. Asp142 contributes to the Zn(2+) binding site. Catalysis depends on Glu176, which acts as the Proton acceptor. Residues Glu177, Asp199, and His381 each coordinate Zn(2+).

It belongs to the peptidase M20B family. The cofactor is Zn(2+).

The protein localises to the cytoplasm. It carries out the reaction Release of the N-terminal residue from a tripeptide.. In terms of biological role, cleaves the N-terminal amino acid of tripeptides. The sequence is that of Peptidase T from Geobacillus sp. (strain WCH70).